The primary structure comprises 689 residues: MTQQTFLVEIGTEELPPKALRSLAESFAANFTAELNNANLPYGEVIWYAAPRRLALKVTNLSATQADREVEKRGPAIAQAFDAEGKPSKAAEGWARGCGITVDQAERLVTDKGEWLLYRAHVKGQSAQLLLAGMVNTALSKLPIPKLMRWGDKDTQFVRPVHTVTMLLGSEVIPGTVLGIDSDRIIRGHRFMGEPEFTLDNADQYPQVLQERGKVIADYELRKAIIKRDAELAAQKIGGVADLSESLLEEVASLVEWPVVLTAKFEEKFLAVPAEALVYTMKGDQKYFPVYDTAGNLLPNFIFVANIESKDPQQIISGNEKVVRPRLADAEFFFKTDRKKRLEDNLPRLETVLFQQQLGTLRDKTDRIQALAGWVAAQIGADVNHATRAGLLSKCDLMTNMVFEFTDTQGVMGMHYARHDGEAEDVAVALNEQYQPRFAGDDLPSNPVACALAIADKMDTLAGIFGIGQHPKGDKDPFALRRAALGVLRIIVEKNLPLDLQTLTEEAVRLYGSKLTNTKVVDEVIEFMLGRFRAWYQDEGHSVDTIQAVLARRPTRPADFDARVKAVTYFRTLDAAAALAAANKRVSNILAKSTDKLNDHVRASVLKEPAELKLATHLVVLRDKLEPVFAAGQYQEALVELAALRETVDEFFESVMVMDEDDAVRVNRLTLLSKLRELFLQVADISLLQ.

Belongs to the class-II aminoacyl-tRNA synthetase family. In terms of assembly, tetramer of two alpha and two beta subunits.

It localises to the cytoplasm. The catalysed reaction is tRNA(Gly) + glycine + ATP = glycyl-tRNA(Gly) + AMP + diphosphate. In Yersinia enterocolitica serotype O:8 / biotype 1B (strain NCTC 13174 / 8081), this protein is Glycine--tRNA ligase beta subunit.